The sequence spans 201 residues: uncharacterized protein (201 aa).

This is an uncharacterized protein from Bacillus subtilis (strain 168).